We begin with the raw amino-acid sequence, 548 residues long: Chaperonin GroEL (548 aa).

Residues 29-32 (TLGP), Lys-50, 86-90 (DGTTT), Gly-416, and Asp-497 each bind ATP.

This sequence belongs to the chaperonin (HSP60) family. In terms of assembly, forms a cylinder of 14 subunits composed of two heptameric rings stacked back-to-back. Interacts with the co-chaperonin GroES.

It localises to the cytoplasm. It carries out the reaction ATP + H2O + a folded polypeptide = ADP + phosphate + an unfolded polypeptide.. Together with its co-chaperonin GroES, plays an essential role in assisting protein folding. The GroEL-GroES system forms a nano-cage that allows encapsulation of the non-native substrate proteins and provides a physical environment optimized to promote and accelerate protein folding. The sequence is that of Chaperonin GroEL from Neorickettsia sennetsu (strain ATCC VR-367 / Miyayama) (Ehrlichia sennetsu).